The chain runs to 338 residues: Holliday junction branch migration complex subunit RuvB (338 aa).

The segment at 1–22 (MVDDERVVSPETADDHEDSVEK) is disordered. Residues 4–185 (DERVVSPETA…FGIVEHMAYY (182 aa)) form a large ATPase domain (RuvB-L) region. ATP contacts are provided by residues Leu-24, Arg-25, Gly-66, Lys-69, Thr-70, Thr-71, 132–134 (EDF), Arg-175, Tyr-185, and Arg-222. Thr-70 serves as a coordination point for Mg(2+). Residues 186-257 (ETTDLQEIVL…IVDHALDLLR (72 aa)) are small ATPAse domain (RuvB-S). A head domain (RuvB-H) region spans residues 260 to 338 (SAGLDATDIK…HLGRTMPDNN (79 aa)). Positions 315 and 320 each coordinate DNA.

The protein belongs to the RuvB family. Homohexamer. Forms an RuvA(8)-RuvB(12)-Holliday junction (HJ) complex. HJ DNA is sandwiched between 2 RuvA tetramers; dsDNA enters through RuvA and exits via RuvB. An RuvB hexamer assembles on each DNA strand where it exits the tetramer. Each RuvB hexamer is contacted by two RuvA subunits (via domain III) on 2 adjacent RuvB subunits; this complex drives branch migration. In the full resolvosome a probable DNA-RuvA(4)-RuvB(12)-RuvC(2) complex forms which resolves the HJ.

The protein localises to the cytoplasm. It catalyses the reaction ATP + H2O = ADP + phosphate + H(+). The RuvA-RuvB-RuvC complex processes Holliday junction (HJ) DNA during genetic recombination and DNA repair, while the RuvA-RuvB complex plays an important role in the rescue of blocked DNA replication forks via replication fork reversal (RFR). RuvA specifically binds to HJ cruciform DNA, conferring on it an open structure. The RuvB hexamer acts as an ATP-dependent pump, pulling dsDNA into and through the RuvAB complex. RuvB forms 2 homohexamers on either side of HJ DNA bound by 1 or 2 RuvA tetramers; 4 subunits per hexamer contact DNA at a time. Coordinated motions by a converter formed by DNA-disengaged RuvB subunits stimulates ATP hydrolysis and nucleotide exchange. Immobilization of the converter enables RuvB to convert the ATP-contained energy into a lever motion, pulling 2 nucleotides of DNA out of the RuvA tetramer per ATP hydrolyzed, thus driving DNA branch migration. The RuvB motors rotate together with the DNA substrate, which together with the progressing nucleotide cycle form the mechanistic basis for DNA recombination by continuous HJ branch migration. Branch migration allows RuvC to scan DNA until it finds its consensus sequence, where it cleaves and resolves cruciform DNA. This Levilactobacillus brevis (strain ATCC 367 / BCRC 12310 / CIP 105137 / JCM 1170 / LMG 11437 / NCIMB 947 / NCTC 947) (Lactobacillus brevis) protein is Holliday junction branch migration complex subunit RuvB.